The following is a 416-amino-acid chain: ATP-dependent Clp protease ATP-binding subunit ClpX (416 aa).

In terms of domain architecture, ClpX-type ZB spans 1–54 (MFKFGDEKGQLKCSFCGKSQEQVRKLVAGPGVYICDECIELCNEIIEEELNDDV). Residues cysteine 13, cysteine 16, cysteine 35, and cysteine 38 each contribute to the Zn(2+) site. Residue 117-124 (PTGCGKTL) coordinates ATP.

This sequence belongs to the ClpX chaperone family. In terms of assembly, component of the ClpX-ClpP complex. Forms a hexameric ring that, in the presence of ATP, binds to fourteen ClpP subunits assembled into a disk-like structure with a central cavity, resembling the structure of eukaryotic proteasomes.

ATP-dependent specificity component of the Clp protease. It directs the protease to specific substrates. Can perform chaperone functions in the absence of ClpP. This chain is ATP-dependent Clp protease ATP-binding subunit ClpX, found in Halothermothrix orenii (strain H 168 / OCM 544 / DSM 9562).